The sequence spans 76 residues: Translational regulator CsrA (76 aa).

Belongs to the CsrA/RsmA family. Homodimer; the beta-strands of each monomer intercalate to form a hydrophobic core, while the alpha-helices form wings that extend away from the core.

Its subcellular location is the cytoplasm. A translational regulator that binds mRNA to regulate translation initiation and/or mRNA stability. Usually binds in the 5'-UTR at or near the Shine-Dalgarno sequence preventing ribosome-binding, thus repressing translation. Its main target seems to be the major flagellin gene, while its function is anatagonized by FliW. The sequence is that of Translational regulator CsrA from Helicobacter pylori (strain P12).